The following is a 341-amino-acid chain: Phenylalanine--tRNA ligase alpha subunit (341 aa).

Position 256 (E256) interacts with Mg(2+).

It belongs to the class-II aminoacyl-tRNA synthetase family. Phe-tRNA synthetase alpha subunit type 1 subfamily. In terms of assembly, tetramer of two alpha and two beta subunits. Mg(2+) is required as a cofactor.

The protein resides in the cytoplasm. It catalyses the reaction tRNA(Phe) + L-phenylalanine + ATP = L-phenylalanyl-tRNA(Phe) + AMP + diphosphate + H(+). In Leptospira borgpetersenii serovar Hardjo-bovis (strain JB197), this protein is Phenylalanine--tRNA ligase alpha subunit.